Here is a 5202-residue protein sequence, read N- to C-terminus: Usherin (5202 aa).

A signal peptide spans 1-31; that stretch reads MNCPVLSLGSGFLFQVIEMLIFAYFASISLT. Residues 32-5042 lie on the Extracellular side of the membrane; that stretch reads ESRGLFPRLE…KSTEFYSELW (5011 aa). The region spanning 271 to 517 is the Laminin N-terminal domain; that stretch reads QDFRLYQVAL…AVDEITISGR (247 aa). Residues Asn-361 and Asn-451 are each glycosylated (N-linked (GlcNAc...) asparagine). 40 cysteine pairs are disulfide-bonded: Cys-518-Cys-527, Cys-520-Cys-536, Cys-538-Cys-549, Cys-552-Cys-572, Cys-575-Cys-584, Cys-577-Cys-605, Cys-608-Cys-617, Cys-620-Cys-638, Cys-641-Cys-655, Cys-643-Cys-662, Cys-664-Cys-673, Cys-676-Cys-691, Cys-694-Cys-708, Cys-696-Cys-715, Cys-717-Cys-726, Cys-729-Cys-744, Cys-747-Cys-759, Cys-749-Cys-766, Cys-768-Cys-777, Cys-780-Cys-792, Cys-795-Cys-808, Cys-797-Cys-815, Cys-817-Cys-826, Cys-829-Cys-844, Cys-847-Cys-861, Cys-849-Cys-868, Cys-870-Cys-879, Cys-882-Cys-897, Cys-900-Cys-913, Cys-902-Cys-920, Cys-922-Cys-931, Cys-934-Cys-948, Cys-951-Cys-963, Cys-953-Cys-970, Cys-972-Cys-982, Cys-985-Cys-999, Cys-1002-Cys-1014, Cys-1004-Cys-1021, Cys-1023-Cys-1032, and Cys-1035-Cys-1050. 10 consecutive Laminin EGF-like domains span residues 518–574, 575–640, 641–693, 694–746, 747–794, 795–846, 847–899, 900–950, 951–1001, and 1002–1052; these read CQCH…NCKP, CQCN…VCKP, CDCD…GCSP, CNCN…GCEP, CQCN…NCKA, CDCD…LCLP, CNCD…HCQM, CECD…GCLP, CSCH…RCQP, and CNCH…GCSK. N-linked (GlcNAc...) asparagine glycosylation is found at Asn-587 and Asn-611. A glycan (N-linked (GlcNAc...) asparagine) is linked at Asn-650. N-linked (GlcNAc...) asparagine glycosylation occurs at Asn-697. Asn-839, Asn-856, and Asn-862 each carry an N-linked (GlcNAc...) asparagine glycan. Asn-888 carries an N-linked (GlcNAc...) asparagine glycan. The N-linked (GlcNAc...) asparagine glycan is linked to Asn-944. An N-linked (GlcNAc...) asparagine glycan is attached at Asn-1011. Fibronectin type-III domains lie at 1058–1146, 1148–1244, 1245–1363, and 1364–1468; these read PPPR…TKPG, PEGN…APPQ, RLSP…SAPV, and FMIP…AAPA. N-linked (GlcNAc...) asparagine glycans are attached at residues Asn-1071, Asn-1151, and Asn-1174. 4 N-linked (GlcNAc...) asparagine glycosylation sites follow: Asn-1379, Asn-1388, Asn-1479, and Asn-1635. Laminin G-like domains lie at 1517–1709 and 1714–1891; these read MKGI…WEGC and NEGA…LDGC. A disulfide bond links Cys-1672 and Cys-1709. N-linked (GlcNAc...) asparagine glycosylation occurs at Asn-1779. Cys-1862 and Cys-1891 are joined by a disulfide. 14 Fibronectin type-III domains span residues 1869-1955, 1957-2054, 2055-2144, 2145-2239, 2243-2330, 2331-2433, 2437-2531, 2535-2622, 2624-2722, 2726-2819, 2820-2923, 2927-3018, 3022-3112, and 3113-3209; these read TRGA…AAPQ, VPTP…TPQE, APQE…LPPE, HVDS…TDED, GVPA…APPE, GTVN…MPPG, GVLP…TAED, PVVP…TLPG, PEGI…TRPS, GVQP…THPT, VPQN…TLAG, RGAN…TCDG, GMLP…TPSD, and IPTP…CCEE. Residues Asn-1903, Asn-2011, Asn-2014, Asn-2048, Asn-2130, Asn-2182, Asn-2195, Asn-2258, Asn-2285, Asn-2322, Asn-2377, Asn-2382, Asn-2407, and Asn-2413 are each glycosylated (N-linked (GlcNAc...) asparagine). Asn-2581, Asn-2584, Asn-2656, Asn-2710, Asn-2770, and Asn-2788 each carry an N-linked (GlcNAc...) asparagine glycan. N-linked (GlcNAc...) asparagine glycosylation is found at Asn-2930, Asn-2937, Asn-2970, Asn-3032, and Asn-3099. N-linked (GlcNAc...) asparagine glycans are attached at residues Asn-3217, Asn-3330, Asn-3419, and Asn-3433. Disulfide bonds link Cys-3371–Cys-3444 and Cys-3399–Cys-3425. Fibronectin type-III domains follow at residues 3403-3497, 3501-3589, 3592-3682, 3684-3770, 3774-3865, 3866-3963, 3964-4067, 4068-4153, 4157-4261, 4262-4357, 4358-4445, 4446-4530, 4534-4630, 4636-4733, 4734-4827, and 4828-4927; these read CPAS…TKED, GVSP…TQGV, SILP…AAPE, VWVT…TPMS, EIYP…TPEA, APMD…TLEA, PPQD…SSPS, GLRN…TDEA, SQLA…TLQA, PPEG…AAPS, EVSP…ALPE, NMDS…TSPS, GMEP…TPEI, PPPH…TGPA, PPEG…THPA, and PPSG…SFTT. N-linked (GlcNAc...) asparagine glycans are attached at residues Asn-3653, Asn-3694, Asn-3733, Asn-3780, and Asn-3849. Asn-3984 is a glycosylation site (N-linked (GlcNAc...) asparagine). N-linked (GlcNAc...) asparagine glycans are attached at residues Asn-4202, Asn-4226, Asn-4317, and Asn-4418. The tract at residues 4518 to 4541 is disordered; sequence ILSPLVKDRTSPSAPSGMEPPKLQ. 5 N-linked (GlcNAc...) asparagine glycosylation sites follow: Asn-4564, Asn-4583, Asn-4691, Asn-4754, and Asn-4800. 2 N-linked (GlcNAc...) asparagine glycosylation sites follow: Asn-4943 and Asn-4950. A helical membrane pass occupies residues 5043 to 5063; sequence FIVLMAMLGLILLAIFLSLIL. The Cytoplasmic portion of the chain corresponds to 5064 to 5202; sequence QRKIHKEPYI…ERTTFTDTHL (139 aa). Residues 5200–5202 carry the PDZ-binding motif; that stretch reads THL.

Interacts with collagen IV and fibronectin via its laminin EGF-like domains. Interaction with collagen may be required for stable integration into the basement membrane. Interacts with NINL. Interacts with USH1C. Component of USH2 complex, composed of ADGRV1, PDZD7, USH2A and WHRN. Interacts with ADGRV1/MASS1 (via N-terminal PDZ domain). Interacts (via the cytoplasmic region) with WHRN. Interacts (via the cytoplasmic region) with PDZD7. Interacts (via the cytoplasmic region) with VEZT and MYO7A (via MyTH4-FERM domains); the interaction associates VEZT with the USH2 complex at the stereocilia base. Present in the basement membrane of many, but not all tissues. Expressed in retina, cochlea, small and large intestine, pancreas, bladder, prostate, esophagus, trachea, thymus, salivary glands, placenta, ovary, fallopian tube, uterus and testis. Absent in many other tissues such as heart, lung, liver, kidney and brain. In the retina, it is present in the basement membranes in the Bruch's layer choroid capillary basement membranes, where it localizes just beneath the retinal pigment epithelial cells (at protein level). Weakly expressed. Isoform 2 is expressed in fetal eye, cochlea and heart, and at very low level in brain, CNS, intestine, skeleton, tongue, kidney and lung. Isoform 2 is not expressed in stomach and liver. In adult tissues, isoform 2 is expressed in neural retina and testis, and at low level in brain, heart, kidney and liver. Isoform 1 displays a similar pattern of expression but is expressed at very low level in fetal cochlea.

Its subcellular location is the cell projection. It localises to the stereocilium membrane. It is found in the secreted. Functionally, involved in hearing and vision as member of the USH2 complex. In the inner ear, required for the maintenance of the hair bundle ankle formation, which connects growing stereocilia in developing cochlear hair cells. In retina photoreceptors, the USH2 complex is required for the maintenance of periciliary membrane complex that seems to play a role in regulating intracellular protein transport. The protein is Usherin (USH2A) of Homo sapiens (Human).